Reading from the N-terminus, the 678-residue chain is uncharacterized protein (678 aa).

The next 2 helical transmembrane spans lie at leucine 14–leucine 34 and glycine 180–phenylalanine 200.

It belongs to the mycobacterial PPE family.

It is found in the cell membrane. This is an uncharacterized protein from Mycobacterium tuberculosis (strain CDC 1551 / Oshkosh).